Here is a 258-residue protein sequence, read N- to C-terminus: Global transcriptional regulator CodY (258 aa).

The GAF domain stretch occupies residues 1-156 (MSSLLEKTRQ…SATIIGLEIL (156 aa)). The H-T-H motif DNA-binding region spans 204–223 (ASKIADKVGITRSVIVNALR).

This sequence belongs to the CodY family.

It localises to the cytoplasm. DNA-binding global transcriptional regulator which is involved in the adaptive response to starvation and acts by directly or indirectly controlling the expression of numerous genes in response to nutrient availability. During rapid exponential growth, CodY is highly active and represses genes whose products allow adaptation to nutrient depletion. The chain is Global transcriptional regulator CodY from Clostridium tetani (strain Massachusetts / E88).